The primary structure comprises 521 residues: 56 kDa type-specific antigen (521 aa).

Residues methionine 1–alanine 22 form the signal peptide. Residues leucine 64–valine 86 form a helical membrane-spanning segment. A disordered region spans residues leucine 386–lysine 415. The segment covering cysteine 396 to lysine 415 has biased composition (basic and acidic residues). A helical membrane pass occupies residues threonine 469–alanine 484.

The protein localises to the cell membrane. Its function is as follows. May be an adherent factor for rickettsial adsorption to the host-cell surface and a determinant of virulence of individual rickettsial strain. It is the major outer membrane protein. This Orientia tsutsugamushi (Rickettsia tsutsugamushi) protein is 56 kDa type-specific antigen.